A 124-amino-acid polypeptide reads, in one-letter code: Small ribosomal subunit protein uS12 (124 aa).

The segment at 1-29 is disordered; the sequence is MPTINQLVRRPRRPRESANKAPALQHNPQ. Position 90 is a 3-methylthioaspartic acid (Asp-90).

This sequence belongs to the universal ribosomal protein uS12 family. Part of the 30S ribosomal subunit. Contacts proteins S8 and S17. May interact with IF1 in the 30S initiation complex.

Functionally, with S4 and S5 plays an important role in translational accuracy. Its function is as follows. Interacts with and stabilizes bases of the 16S rRNA that are involved in tRNA selection in the A site and with the mRNA backbone. Located at the interface of the 30S and 50S subunits, it traverses the body of the 30S subunit contacting proteins on the other side and probably holding the rRNA structure together. The combined cluster of proteins S8, S12 and S17 appears to hold together the shoulder and platform of the 30S subunit. This Anaplasma marginale (strain Florida) protein is Small ribosomal subunit protein uS12.